We begin with the raw amino-acid sequence, 493 residues long: Glutamyl-tRNA(Gln) amidotransferase subunit A (493 aa).

Catalysis depends on charge relay system residues Lys-78 and Ser-159. The Acyl-ester intermediate role is filled by Ser-183.

This sequence belongs to the amidase family. GatA subfamily. In terms of assembly, heterotrimer of A, B and C subunits.

It carries out the reaction L-glutamyl-tRNA(Gln) + L-glutamine + ATP + H2O = L-glutaminyl-tRNA(Gln) + L-glutamate + ADP + phosphate + H(+). Its function is as follows. Allows the formation of correctly charged Gln-tRNA(Gln) through the transamidation of misacylated Glu-tRNA(Gln) in organisms which lack glutaminyl-tRNA synthetase. The reaction takes place in the presence of glutamine and ATP through an activated gamma-phospho-Glu-tRNA(Gln). This Sphingopyxis alaskensis (strain DSM 13593 / LMG 18877 / RB2256) (Sphingomonas alaskensis) protein is Glutamyl-tRNA(Gln) amidotransferase subunit A.